A 192-amino-acid polypeptide reads, in one-letter code: Imidazoleglycerol-phosphate dehydratase (192 aa).

The protein belongs to the imidazoleglycerol-phosphate dehydratase family.

Its subcellular location is the cytoplasm. The enzyme catalyses D-erythro-1-(imidazol-4-yl)glycerol 3-phosphate = 3-(imidazol-4-yl)-2-oxopropyl phosphate + H2O. It functions in the pathway amino-acid biosynthesis; L-histidine biosynthesis; L-histidine from 5-phospho-alpha-D-ribose 1-diphosphate: step 6/9. The polypeptide is Imidazoleglycerol-phosphate dehydratase (Methanocella arvoryzae (strain DSM 22066 / NBRC 105507 / MRE50)).